The following is a 242-amino-acid chain: Small ribosomal subunit protein uS2 (242 aa).

It belongs to the universal ribosomal protein uS2 family.

The chain is Small ribosomal subunit protein uS2 from Shewanella amazonensis (strain ATCC BAA-1098 / SB2B).